Consider the following 117-residue polypeptide: Large ribosomal subunit protein bL20 (117 aa).

The protein belongs to the bacterial ribosomal protein bL20 family.

In terms of biological role, binds directly to 23S ribosomal RNA and is necessary for the in vitro assembly process of the 50S ribosomal subunit. It is not involved in the protein synthesizing functions of that subunit. This chain is Large ribosomal subunit protein bL20, found in Vibrio metschnikovii.